We begin with the raw amino-acid sequence, 163 residues long: Small ribosomal subunit protein uS5 (163 aa).

In terms of domain architecture, S5 DRBM spans 8–71 (FIEKVVSLNR…EQARKAMMKI (64 aa)).

It belongs to the universal ribosomal protein uS5 family. In terms of assembly, part of the 30S ribosomal subunit. Contacts proteins S4 and S8.

Functionally, with S4 and S12 plays an important role in translational accuracy. Located at the back of the 30S subunit body where it stabilizes the conformation of the head with respect to the body. The chain is Small ribosomal subunit protein uS5 from Lawsonia intracellularis (strain PHE/MN1-00).